Reading from the N-terminus, the 104-residue chain is PLAT domain-containing protein 3 (104 aa).

In terms of domain architecture, PLAT spans 1–104 (MSLRLYDSYG…LARDASPYEL (104 aa)).

The sequence is that of PLAT domain-containing protein 3 from Arabidopsis thaliana (Mouse-ear cress).